A 401-amino-acid chain; its full sequence is Protein zntC (401 aa).

The next 3 membrane-spanning stretches (helical) occupy residues 33-53 (GGLI…PWFL), 61-81 (LVSV…GAGF), and 114-134 (ITIV…SGGL). The interval 141–247 (NHMDLSQHNH…SHKDEKDSEK (107 aa)) is disordered. Residues 167–184 (GDDDDDDVNEDQEEDSTK) show a composition bias toward acidic residues. A compositionally biased stretch (low complexity) spans 200-209 (HNSSNSSSNG). The segment covering 212–225 (HGLKKKKKSKKEHG) has biased composition (basic residues). The segment covering 226 to 247 (HGHNHDHSSNGHSHKDEKDSEK) has biased composition (basic and acidic residues). Transmembrane regions (helical) follow at residues 256-276 (AWVF…GLGS), 285-305 (GLLI…GIAI), 316-336 (CIAL…GMAI), 351-371 (GIIL…ELLP), and 381-401 (KLKL…ALWV).

The protein belongs to the ZIP transporter (TC 2.A.5) family.

It is found in the membrane. Functionally, may transport divalent cations. May participate, with dstA, in the regulation of the differentiation of stalk cells during development. This is Protein zntC (zntC) from Dictyostelium discoideum (Social amoeba).